We begin with the raw amino-acid sequence, 444 residues long: Argininosuccinate synthase (444 aa).

Residues 17-25 (AFSGGLDTS) and Ala-43 each bind ATP. Tyr-99 is a binding site for L-citrulline. ATP-binding residues include Gly-129 and Thr-131. L-aspartate-binding residues include Thr-131, Asn-135, and Asp-136. An L-citrulline-binding site is contributed by Asn-135. Asp-136 provides a ligand contact to ATP. Residues Arg-139 and Ser-192 each contribute to the L-citrulline site. Asp-194 is a binding site for ATP. Positions 201, 203, and 280 each coordinate L-citrulline.

Belongs to the argininosuccinate synthase family. Type 2 subfamily. In terms of assembly, homotetramer.

The protein localises to the cytoplasm. It carries out the reaction L-citrulline + L-aspartate + ATP = 2-(N(omega)-L-arginino)succinate + AMP + diphosphate + H(+). The protein operates within amino-acid biosynthesis; L-arginine biosynthesis; L-arginine from L-ornithine and carbamoyl phosphate: step 2/3. The sequence is that of Argininosuccinate synthase from Paraburkholderia phymatum (strain DSM 17167 / CIP 108236 / LMG 21445 / STM815) (Burkholderia phymatum).